A 355-amino-acid chain; its full sequence is Guanine nucleotide-binding protein G(z) subunit alpha (355 aa).

Basic and acidic residues predominate over residues 1 to 14 (MGCRQSSEEKEAAR). Residues 1 to 26 (MGCRQSSEEKEAARRSRRIDRHLRSE) form a disordered region. The N-myristoyl glycine moiety is linked to residue Gly-2. Cys-3 is lipidated: S-palmitoyl cysteine. Residues 32 to 355 (REIKLLLLGT…QNNLKYIGLC (324 aa)) form the G-alpha domain. The G1 motif stretch occupies residues 35–48 (KLLLLGTSNSGKST). GTP-binding positions include 40 to 47 (GTSNSGKS), 176 to 182 (LRSRDMT), 201 to 205 (DVGGQ), 270 to 273 (NKKD), and Ala-327. Residues Ser-47 and Thr-182 each contribute to the Mg(2+) site. A G2 motif region spans residues 174–182 (DILRSRDMT). The segment at 197 to 206 (FKMVDVGGQR) is G3 motif. Residues 266 to 273 (ILFLNKKD) are G4 motif. A G5 motif region spans residues 325 to 330 (TCATDT).

This sequence belongs to the G-alpha family. G(i/o/t/z) subfamily. G-proteins are composed of 3 units; alpha, beta and gamma. The alpha chain contains the guanine nucleotide binding site. Interacts with ADGRB2.

It localises to the membrane. Functionally, guanine nucleotide-binding proteins (G proteins) are involved as modulators or transducers in various transmembrane signaling systems. The chain is Guanine nucleotide-binding protein G(z) subunit alpha (Gnaz) from Rattus norvegicus (Rat).